Consider the following 151-residue polypeptide: Deoxyuridine 5'-triphosphate nucleotidohydrolase (151 aa).

Substrate-binding positions include 70–72 (RSG), N83, 87–89 (LID), and M97.

The protein belongs to the dUTPase family. Mg(2+) is required as a cofactor.

It carries out the reaction dUTP + H2O = dUMP + diphosphate + H(+). The protein operates within pyrimidine metabolism; dUMP biosynthesis; dUMP from dCTP (dUTP route): step 2/2. In terms of biological role, this enzyme is involved in nucleotide metabolism: it produces dUMP, the immediate precursor of thymidine nucleotides and it decreases the intracellular concentration of dUTP so that uracil cannot be incorporated into DNA. The protein is Deoxyuridine 5'-triphosphate nucleotidohydrolase of Pseudomonas syringae pv. tomato (strain ATCC BAA-871 / DC3000).